The primary structure comprises 178 residues: Caveolin-1 (178 aa).

Ser2 carries the N-acetylserine modification. At Ser2 the chain carries Phosphoserine. Positions 2–94 (SGGKYVDSEG…WKASFTTFTV (93 aa)) are required for homooligomerization. At 2–104 (SGGKYVDSEG…TKYWFYRLLS (103 aa)) the chain is on the cytoplasmic side. An N6-acetyllysine; alternate modification is found at Lys5. Lys5 is covalently cross-linked (Glycyl lysine isopeptide (Lys-Gly) (interchain with G-Cter in ubiquitin); alternate). A Phosphotyrosine modification is found at Tyr6. Ser9 is subject to Phosphoserine. Tyr14 is subject to Phosphotyrosine; by ABL1. The residue at position 25 (Tyr25) is a Phosphotyrosine. Residues Lys26, Lys30, Lys39, Lys47, and Lys57 each participate in a glycyl lysine isopeptide (Lys-Gly) (interchain with G-Cter in ubiquitin) cross-link. Residues 82 to 94 (DGIWKASFTTFTV) are interaction with CAVIN3. The helical intramembrane region spans 105–125 (ALFGIPMALIWGIYFAILSFL). Over 126–178 (HIWAVVPCIKSFLIEIQCVSRVYSIYVHTFCDPFFEAVGKIFSSIRINMQKEI) the chain is Cytoplasmic. The interval 131-142 (VPCIKSFLIEIQ) is interacts with SPRY1, SPRY2, SPRY3 and SPRY4. S-palmitoyl cysteine attachment occurs at residues Cys133, Cys143, and Cys156. Residues 149–160 (SIYVHTFCDPFF) are interacts with SPRY1, SPRY2, and SPRY4. Residues 167 to 178 (FSSIRINMQKEI) form an interacts with SPRY1, SPRY2, SPRY3 and SPRY4 region.

Belongs to the caveolin family. Homooligomer. Interacts with GLIPR2. Interacts with NOSTRIN. Interacts with SNAP25 and STX1A. Interacts (via the N-terminus) with DPP4; the interaction is direct. Interacts with CTNNB1, CDH1 and JUP. Interacts with PACSIN2; this interaction induces membrane tubulation. Interacts with SLC7A9. Interacts with BMX and BTK. Interacts with TGFBR1. Interacts with CAVIN3 (via leucine-zipper domain) in a cholesterol-sensitive manner. Interacts with CAVIN1. Interacts with EHD2 in a cholesterol-dependent manner. Forms a ternary complex with UBXN6 and VCP; mediates CAV1 targeting to lysosomes for degradation. Interacts with ABCG1; this interaction regulates ABCG1-mediated cholesterol efflux. Interacts with NEU3; this interaction enhances NEU3 sialidase activity within caveola. Interacts (via C-terminus) with SPRY1, SPRY2 (via C-terminus), SPRY3, and SPRY4. Interacts with IGFBP5; this interaction allows trafficking of IGFBP5 from the plasma membrane to the nucleus. Post-translationally, phosphorylated at Tyr-14 by ABL1 in response to oxidative stress. In terms of processing, ubiquitinated. Undergo monoubiquitination and multi- and/or polyubiquitination. Monoubiquitination of N-terminal lysines promotes integration in a ternary complex with UBXN6 and VCP which promotes oligomeric CAV1 targeting to lysosomes for degradation. Ubiquitinated by ZNRF1; leading to degradation and modulation of the TLR4-mediated immune response.

Its subcellular location is the golgi apparatus membrane. It is found in the cell membrane. The protein resides in the membrane. It localises to the caveola. The protein localises to the membrane raft. May act as a scaffolding protein within caveolar membranes. Forms a stable heterooligomeric complex with CAV2 that targets to lipid rafts and drives caveolae formation. Mediates the recruitment of CAVIN proteins (CAVIN1/2/3/4) to the caveolae. Interacts directly with G-protein alpha subunits and can functionally regulate their activity. Involved in the costimulatory signal essential for T-cell receptor (TCR)-mediated T-cell activation. Its binding to DPP4 induces T-cell proliferation and NF-kappa-B activation in a T-cell receptor/CD3-dependent manner. Recruits CTNNB1 to caveolar membranes and may regulate CTNNB1-mediated signaling through the Wnt pathway. Negatively regulates TGFB1-mediated activation of SMAD2/3 by mediating the internalization of TGFBR1 from membrane rafts leading to its subsequent degradation. Binds 20(S)-hydroxycholesterol (20(S)-OHC). This Mustela putorius furo (European domestic ferret) protein is Caveolin-1 (CAV1).